Consider the following 193-residue polypeptide: Large ribosomal subunit protein bL25 (193 aa).

The protein belongs to the bacterial ribosomal protein bL25 family. CTC subfamily. In terms of assembly, part of the 50S ribosomal subunit; part of the 5S rRNA/L5/L18/L25 subcomplex. Contacts the 5S rRNA. Binds to the 5S rRNA independently of L5 and L18.

In terms of biological role, this is one of the proteins that binds to the 5S RNA in the ribosome where it forms part of the central protuberance. This chain is Large ribosomal subunit protein bL25, found in Lachnoclostridium phytofermentans (strain ATCC 700394 / DSM 18823 / ISDg) (Clostridium phytofermentans).